Consider the following 341-residue polypeptide: HTH-type transcriptional repressor CytR (341 aa).

In terms of domain architecture, HTH lacI-type spans 10 to 64 (ATMKDVALKAKVSTATVSRALMNPDKVSQATRNRVEKAAREVGYLPQPMGRNVKR). A DNA-binding region (H-T-H motif) is located at residues 12-31 (MKDVALKAKVSTATVSRALM).

This protein negatively controls the transcription initiation of genes such as deoCABD, udp, and cdd encoding catabolizing enzymes and nupC, nupG, and tsx encoding transporting and pore-forming proteins. Binds cytidine and adenosine as effectors. This chain is HTH-type transcriptional repressor CytR (cytR), found in Escherichia coli (strain K12).